The following is an 865-amino-acid chain: Leucine--tRNA ligase (865 aa).

Positions 58-68 (PYPSGNLHMGH) match the 'HIGH' region motif. Positions 629 to 633 (KMSKS) match the 'KMSKS' region motif. Lys632 contributes to the ATP binding site.

The protein belongs to the class-I aminoacyl-tRNA synthetase family.

Its subcellular location is the cytoplasm. The enzyme catalyses tRNA(Leu) + L-leucine + ATP = L-leucyl-tRNA(Leu) + AMP + diphosphate. The sequence is that of Leucine--tRNA ligase from Synechococcus sp. (strain ATCC 27144 / PCC 6301 / SAUG 1402/1) (Anacystis nidulans).